Reading from the N-terminus, the 84-residue chain is Small ribosomal subunit protein uS15 (84 aa).

It belongs to the universal ribosomal protein uS15 family. As to quaternary structure, part of the 30S ribosomal subunit. Forms a bridge to the 50S subunit in the 70S ribosome, contacting the 23S rRNA.

One of the primary rRNA binding proteins, it binds directly to 16S rRNA where it helps nucleate assembly of the platform of the 30S subunit by binding and bridging several RNA helices of the 16S rRNA. In terms of biological role, forms an intersubunit bridge (bridge B4) with the 23S rRNA of the 50S subunit in the ribosome. The sequence is that of Small ribosomal subunit protein uS15 from Akkermansia muciniphila (strain ATCC BAA-835 / DSM 22959 / JCM 33894 / BCRC 81048 / CCUG 64013 / CIP 107961 / Muc).